Reading from the N-terminus, the 323-residue chain is Biotin synthase (323 aa).

In terms of domain architecture, Radical SAM core spans 46 to 264 (TEIQLSSLLS…IAVARITMPR (219 aa)). [4Fe-4S] cluster-binding residues include cysteine 61, cysteine 65, and cysteine 68. The [2Fe-2S] cluster site is built by cysteine 105, cysteine 136, cysteine 196, and arginine 268.

Belongs to the radical SAM superfamily. Biotin synthase family. In terms of assembly, homodimer. [4Fe-4S] cluster serves as cofactor. [2Fe-2S] cluster is required as a cofactor.

It catalyses the reaction (4R,5S)-dethiobiotin + (sulfur carrier)-SH + 2 reduced [2Fe-2S]-[ferredoxin] + 2 S-adenosyl-L-methionine = (sulfur carrier)-H + biotin + 2 5'-deoxyadenosine + 2 L-methionine + 2 oxidized [2Fe-2S]-[ferredoxin]. It participates in cofactor biosynthesis; biotin biosynthesis; biotin from 7,8-diaminononanoate: step 2/2. Its function is as follows. Catalyzes the conversion of dethiobiotin (DTB) to biotin by the insertion of a sulfur atom into dethiobiotin via a radical-based mechanism. This is Biotin synthase from Bordetella avium (strain 197N).